The chain runs to 549 residues: Oxygen-dependent choline dehydrogenase (549 aa).

4-33 (DFVIIGSGSAGSAMAYRLSEDGRYSVIVIE) lines the FAD pocket. Catalysis depends on histidine 465, which acts as the Proton acceptor.

The protein belongs to the GMC oxidoreductase family. Requires FAD as cofactor.

It catalyses the reaction choline + A = betaine aldehyde + AH2. It carries out the reaction betaine aldehyde + NAD(+) + H2O = glycine betaine + NADH + 2 H(+). It functions in the pathway amine and polyamine biosynthesis; betaine biosynthesis via choline pathway; betaine aldehyde from choline (cytochrome c reductase route): step 1/1. In terms of biological role, involved in the biosynthesis of the osmoprotectant glycine betaine. Catalyzes the oxidation of choline to betaine aldehyde and betaine aldehyde to glycine betaine at the same rate. The chain is Oxygen-dependent choline dehydrogenase from Brucella anthropi (strain ATCC 49188 / DSM 6882 / CCUG 24695 / JCM 21032 / LMG 3331 / NBRC 15819 / NCTC 12168 / Alc 37) (Ochrobactrum anthropi).